The following is a 141-amino-acid chain: Cystatin-S (141 aa).

A signal peptide spans Met1–Ala20. 2 positions are modified to phosphoserine: Ser21 and Ser23. Residues Gln76 to Gly80 carry the Secondary area of contact motif. Intrachain disulfides connect Cys94-Cys104 and Cys118-Cys138.

It belongs to the cystatin family. Post-translationally, phosphorylated at both its N- and C-terminal regions. As to expression, expressed in submandibular and sublingual saliva but not in parotid saliva (at protein level). Expressed in saliva, tears, urine and seminal fluid.

The protein resides in the secreted. This protein strongly inhibits papain and ficin, partially inhibits stem bromelain and bovine cathepsin C, but does not inhibit porcine cathepsin B or clostripain. Papain is inhibited non-competitively. The chain is Cystatin-S (CST4) from Homo sapiens (Human).